The primary structure comprises 94 residues: Protein SKIP34 (94 aa).

Residues M1 to V27 form a disordered region. A coiled-coil region spans residues E23–R61.

In terms of assembly, interacts with SPK1B/ASK2.

The protein is Protein SKIP34 (SKIP34) of Arabidopsis thaliana (Mouse-ear cress).